A 614-amino-acid chain; its full sequence is Subtilin transport ATP-binding protein SpaT (614 aa).

5 consecutive transmembrane segments (helical) span residues 34-54 (FLKLIRFSIITGILPIVSLYI), 69-89 (VSIVITIFLTYLGVSFFSELI), 147-167 (IIQAIITMTTSFVTLLSSIAF), 175-195 (VSLLLLVIPVISLFYFLKIGQ), and 267-287 (IAVQLVGAVIIFIAIMSAFAG). Positions 34 to 320 (FLKLIRFSII…IMTSIYSIYN (287 aa)) constitute an ABC transmembrane type-1 domain. One can recognise an ABC transporter domain in the interval 353–593 (VVFQNVSFIY…CPLYKKMDES (241 aa)). 387–394 (GPNGSGKK) serves as a coordination point for ATP.

It belongs to the ABC transporter superfamily.

It is found in the cell membrane. Functionally, probably implicated in the export process of the lantibiotic subtilin. This Bacillus subtilis protein is Subtilin transport ATP-binding protein SpaT (spaT).